A 113-amino-acid chain; its full sequence is UPF0342 protein SZO_10960 (113 aa).

The protein belongs to the UPF0342 family.

This chain is UPF0342 protein SZO_10960, found in Streptococcus equi subsp. zooepidemicus (strain H70).